We begin with the raw amino-acid sequence, 467 residues long: UDP-N-acetylmuramoylalanine--D-glutamate ligase (467 aa).

Residue 118–124 (GTNGKTT) coordinates ATP.

This sequence belongs to the MurCDEF family.

The protein localises to the cytoplasm. It carries out the reaction UDP-N-acetyl-alpha-D-muramoyl-L-alanine + D-glutamate + ATP = UDP-N-acetyl-alpha-D-muramoyl-L-alanyl-D-glutamate + ADP + phosphate + H(+). It functions in the pathway cell wall biogenesis; peptidoglycan biosynthesis. Functionally, cell wall formation. Catalyzes the addition of glutamate to the nucleotide precursor UDP-N-acetylmuramoyl-L-alanine (UMA). The protein is UDP-N-acetylmuramoylalanine--D-glutamate ligase of Streptomyces avermitilis (strain ATCC 31267 / DSM 46492 / JCM 5070 / NBRC 14893 / NCIMB 12804 / NRRL 8165 / MA-4680).